Here is a 73-residue protein sequence, read N- to C-terminus: MKVKCLLAVFLIVLIAAEHCQALFFLPSLIGGLISAFKGRRKRELGTQFQPRQKNFMRREVDLERLFAEMPDY.

An N-terminal signal peptide occupies residues 1–22; that stretch reads MKVKCLLAVFLIVLIAAEHCQA. K38 is modified (lysine amide). The propeptide occupies 44–73; it reads ELGTQFQPRQKNFMRREVDLERLFAEMPDY.

The protein belongs to the non-disulfide-bridged peptide (NDBP) superfamily. Short antimicrobial peptide (group 4) family. In terms of tissue distribution, expressed by the venom gland.

The protein resides in the secreted. Its subcellular location is the target cell membrane. Cationic host defense peptide that have antibacterial activity by breaking membranes. Is more effective on Gram-positive than on Gram-negative bacteria. This is Mucroporin-like peptide from Lychas mucronatus (Chinese swimming scorpion).